Consider the following 497-residue polypeptide: tRNA (adenine(58)-N(1))-methyltransferase non-catalytic subunit TRM6 (497 aa).

Positions 69–102 (TNGGSLQPKKKKEEPTSETKEAGTDNRNIIDDGK) are disordered. The span at 79–102 (KKEEPTSETKEAGTDNRNIIDDGK) shows a compositional bias: basic and acidic residues. The interval 94 to 104 (NRNIIDDGKSQ) is substrate. Threonine 107 is subject to Phosphothreonine. 2 substrate regions span residues 145–154 (KYIKKKKKKY) and 175–182 (REPGKINH). The tract at residues 276–354 (SSEPKDIASV…EKQRRQEEQK (79 aa)) is disordered. Residues serine 298 and serine 305 each carry the phosphoserine modification. A compositionally biased stretch (basic and acidic residues) spans 311-354 (ESNHPEEQERMEIVSQDPDYKEPKESGSKKDYIQEKQRRQEEQK). Substrate contacts are provided by arginine 349 and arginine 377. Substrate stretches follow at residues 415-423 (RERGGVINL) and 434-441 (QVLPDRSH). Residues 468 to 497 (PSLKSSTSTLESHKTEEPAAKKRKCPESDS) are disordered. Over residues 478 to 497 (ESHKTEEPAAKKRKCPESDS) the composition is skewed to basic and acidic residues.

It belongs to the TRM6/GCD10 family. As to quaternary structure, heterotetramer; composed of two copies of TRMT6 and two copies of TRMT61A.

The protein resides in the nucleus. Substrate-binding subunit of tRNA (adenine-N(1)-)-methyltransferase, which catalyzes the formation of N(1)-methyladenine at position 58 (m1A58) in initiator methionyl-tRNA. Together with the TRMT61A catalytic subunit, part of a mRNA N(1)-methyltransferase complex that mediates methylation of adenosine residues at the N(1) position of a small subset of mRNAs: N(1) methylation takes place in tRNA T-loop-like structures of mRNAs and is only present at low stoichiometries. This Bos taurus (Bovine) protein is tRNA (adenine(58)-N(1))-methyltransferase non-catalytic subunit TRM6 (TRMT6).